The chain runs to 152 residues: Ribosome maturation factor RimP (152 aa).

The protein belongs to the RimP family.

The protein localises to the cytoplasm. In terms of biological role, required for maturation of 30S ribosomal subunits. This is Ribosome maturation factor RimP from Alkaliphilus metalliredigens (strain QYMF).